The chain runs to 336 residues: Nitrilase (336 aa).

A CN hydrolase domain is found at 5–278 (LKVACVQAAP…EGLLYATLDP (274 aa)). Glu45 functions as the Proton acceptor in the catalytic mechanism. Residue Lys127 is the Proton donor of the active site. Cys161 acts as the Nucleophile in catalysis.

This sequence belongs to the carbon-nitrogen hydrolase superfamily. Nitrilase family.

The catalysed reaction is a nitrile + 2 H2O = a carboxylate + NH4(+). It carries out the reaction (indol-3-yl)acetonitrile + 2 H2O = (indol-3-yl)acetate + NH4(+). It catalyses the reaction phenylpropanonitrile + 2 H2O = 3-phenylpropanoate + NH4(+). Its function is as follows. Arylacetonitrilase which is capable of hydrolyzing indole-3-acetonitrile (IAN) to the plant hormone indole-3-acetate (IAA), and allows the plant pathogenic bacterium to use IAN as a sole nitrogen source. Is also able to hydrolyze phenylpropionitrile (PPN), allowing the use of this compound as a sole nitrogen source. This enzyme may represent an additional mechanism for IAA biosynthesis or may be used to degrade and assimilate aldoximes and nitriles produced during host plant secondary metabolism. The chain is Nitrilase from Pseudomonas syringae pv. syringae (strain B728a).